A 432-amino-acid chain; its full sequence is Histidine--tRNA ligase (432 aa).

It belongs to the class-II aminoacyl-tRNA synthetase family. As to quaternary structure, homodimer.

The protein resides in the cytoplasm. The catalysed reaction is tRNA(His) + L-histidine + ATP = L-histidyl-tRNA(His) + AMP + diphosphate + H(+). This chain is Histidine--tRNA ligase, found in Symbiobacterium thermophilum (strain DSM 24528 / JCM 14929 / IAM 14863 / T).